The chain runs to 479 residues: Transcription factor CP2-like protein 1 (479 aa).

A Grh/CP2 DB domain is found at 43 to 280; it reads RLPPLQYVLC…PSPSYNGSPN (238 aa). Disordered stretches follow at residues 219–245 and 271–301; these read KPKGADRKQKTDREKMEKRTAQEKEKY and PSPSYNGSPNSFGLGEGNASPTHPVEALPVG. Residues 221 to 245 show a composition bias toward basic and acidic residues; that stretch reads KGADRKQKTDREKMEKRTAQEKEKY. The segment at 261 to 365 is SAM2-like domain; the sequence is PDVAYQVNSA…IRLFNAIKGR (105 aa). Polar residues predominate over residues 271–281; it reads PSPSYNGSPNS.

This sequence belongs to the grh/CP2 family. CP2 subfamily. As to quaternary structure, forms homohexamers via its SAM-like domain. Interacts with MTA1; which is indispensable for TFCP2l1-mediated self-renewal-promoting effect and endoderm-inhibiting action. In terms of tissue distribution, highly expressed in placental JEG-3 cells and very low levels of expression in non-steroidogenic cells. No expression was seen in adrenal NCI-H295A cells or in adrenal tissue.

Its subcellular location is the nucleus. Transcription factor that facilitates establishment and maintenance of pluripotency in embryonic stem cells (ESCs). With KLF2, acts as the major effector of self-renewal that mediates induction of pluripotency downstream of LIF/STAT3 and Wnt/beta-catenin signaling. Required for normal duct development in the salivary gland and kidney. Coordinates the development of the kidney collecting ducts intercalated (IC) and principal (PC) cells, which regulate acid-base and salt-water homeostasis, respectively. Regulates the expression of IC genes including subunits B1 and D2 of the V-ATPase complex, OXGR1, CA12, SLC4A1, AQP6 and IC-specific transcription factor FOXI1. Also regulates the expression of JAG1 and subsequent notch signaling in the collecting duct. JAG1 initiates notch signaling in PCs but inhibits notch signaling in ICs. Acts as a transcriptional suppressor that may suppress UBP1-mediated transcriptional activation. Modulates the placental expression of CYP11A1. This chain is Transcription factor CP2-like protein 1 (TFCP2L1), found in Homo sapiens (Human).